The chain runs to 689 residues: MNQRPIQTATLSWNEQGTPVSEQFGDIYFSNEDGLEETHHVFLKGNGFPARFASHPQQSCIFAETGFGTGLNFLTLWRDFALFRQQSPNATLRRLHYISFEKYPLHVADLASAHARWPELASFAEQLRAQWPLPLAGCHRILLADGAITLDLWFGDVNTLLPTLDDSLNNQVDAWFLDGFAPAKNPDMWNEQLFNAMARMTRPGGTFSTFTAAGFVRRGLQQAGFNVTKVKGFGQKREMLTGTLPQQIHAPTAPWYHRPAATRCDDIAIIGGGIVSALTALALQRRGAVVTLYCADAQPAQGASGNRQGALYPLLNGKNDALETFFTSAFTFARRQYDQLLEQGIAFDHQWCGVSQLAFDDKSRGKIEKMLHTQWPVEFAEAMSREQLSELAGLDCAHDGIHYPAGGWLCPSDLTHALMMLAQQHGMTCHYQHELQRLKRIDNQWQLTFGQSQAAKHHATVILATGHRLPEWEQTHHLPLSAVRGQVSHIPTTPVLSQLQQVLCYDGYLTPVNPANQHHCIGASYQRGDIATDFRLTEQQENRERLLRCLPQVSWPQQVDVSDNQARCGVRCAIRDHLPMVGAVPDYAATLAQYQDLSRRIQHGGESEVNDIAVAPVWPELFMVGGLGSRGLCSAPLVAEILAAQMFGEPLPLDAKTLAALNPNRFWIKKLLKGRPVQTRSPATQESSR.

A tRNA (mnm(5)s(2)U34)-methyltransferase region spans residues 1–245; sequence MNQRPIQTAT…KREMLTGTLP (245 aa). Residues 270–689 form an FAD-dependent cmnm(5)s(2)U34 oxidoreductase region; the sequence is IGGGIVSALT…RSPATQESSR (420 aa).

This sequence in the N-terminal section; belongs to the methyltransferase superfamily. tRNA (mnm(5)s(2)U34)-methyltransferase family. In the C-terminal section; belongs to the DAO family. The cofactor is FAD.

The protein localises to the cytoplasm. The catalysed reaction is 5-aminomethyl-2-thiouridine(34) in tRNA + S-adenosyl-L-methionine = 5-methylaminomethyl-2-thiouridine(34) in tRNA + S-adenosyl-L-homocysteine + H(+). Functionally, catalyzes the last two steps in the biosynthesis of 5-methylaminomethyl-2-thiouridine (mnm(5)s(2)U) at the wobble position (U34) in tRNA. Catalyzes the FAD-dependent demodification of cmnm(5)s(2)U34 to nm(5)s(2)U34, followed by the transfer of a methyl group from S-adenosyl-L-methionine to nm(5)s(2)U34, to form mnm(5)s(2)U34. The chain is tRNA 5-methylaminomethyl-2-thiouridine biosynthesis bifunctional protein MnmC from Yersinia pseudotuberculosis serotype I (strain IP32953).